The following is an 866-amino-acid chain: Coiled-coil domain-containing protein 178 (866 aa).

Residues 1-21 (MPENEKEPAQPTTNEDALDTG) form a disordered region. 6 coiled-coil regions span residues 157 to 266 (ELKK…DYMA), 292 to 403 (EVME…DQYC), 439 to 480 (KDLT…EEEV), 514 to 539 (KTEELEDKLADLKRIFKGREELLKKL), 570 to 631 (RRQV…LLKK), and 665 to 705 (EKCI…REHV).

This is Coiled-coil domain-containing protein 178 (Ccdc178) from Mus musculus (Mouse).